Here is a 183-residue protein sequence, read N- to C-terminus: Pyruvoyl-dependent arginine decarboxylase (183 aa).

Residue serine 44 is modified to Pyruvic acid (Ser).

This sequence belongs to the PdaD family. Pyruvate serves as cofactor.

It carries out the reaction L-arginine + H(+) = agmatine + CO2. The protein is Pyruvoyl-dependent arginine decarboxylase of Nitrosopumilus maritimus (strain SCM1).